The primary structure comprises 515 residues: 2-isopropylmalate synthase (515 aa).

The Pyruvate carboxyltransferase domain maps to 5–268 (VIIFDTTLRD…VCGIDATQIV (264 aa)). Mn(2+) contacts are provided by Asp14, His202, His204, and Asn239. The tract at residues 394–515 (KFISLSQHSE…QAKLNAQMTP (122 aa)) is regulatory domain.

The protein belongs to the alpha-IPM synthase/homocitrate synthase family. LeuA type 1 subfamily. As to quaternary structure, homodimer. It depends on Mn(2+) as a cofactor.

Its subcellular location is the cytoplasm. It catalyses the reaction 3-methyl-2-oxobutanoate + acetyl-CoA + H2O = (2S)-2-isopropylmalate + CoA + H(+). It participates in amino-acid biosynthesis; L-leucine biosynthesis; L-leucine from 3-methyl-2-oxobutanoate: step 1/4. In terms of biological role, catalyzes the condensation of the acetyl group of acetyl-CoA with 3-methyl-2-oxobutanoate (2-ketoisovalerate) to form 3-carboxy-3-hydroxy-4-methylpentanoate (2-isopropylmalate). The polypeptide is 2-isopropylmalate synthase (Polynucleobacter necessarius subsp. necessarius (strain STIR1)).